The sequence spans 183 residues: Adenine phosphoribosyltransferase (183 aa).

It belongs to the purine/pyrimidine phosphoribosyltransferase family. Homodimer.

It is found in the cytoplasm. It carries out the reaction AMP + diphosphate = 5-phospho-alpha-D-ribose 1-diphosphate + adenine. Its pathway is purine metabolism; AMP biosynthesis via salvage pathway; AMP from adenine: step 1/1. Functionally, catalyzes a salvage reaction resulting in the formation of AMP, that is energically less costly than de novo synthesis. The chain is Adenine phosphoribosyltransferase from Shewanella sp. (strain ANA-3).